The chain runs to 284 residues: MQQKMIQFSGDVSLPAVGQGTWYMGEDASQRKTEVAALRAGIELGLTLIDTAEMYADGGAEKVVGEALTGLREKVFLVSKVYPWNAGGQKAINACEASLRRLNTDYLDLYLLHWSGSFAFEETVAAMEKLIAQGKIRRWGVSNLDYADMQELWQLPGGNQCATNQVLYHLGSRGIEYDLLPWCQQQQMPVMAYSPLAQAGRLRNGLLKNAVVNEIAHAHNISAAQVLLAWVISHQGVMAIPKAATIAHVQQNAAVLEVELSSAELAMLDKAYPAPKGKTALDMV.

Belongs to the aldo/keto reductase family.

The enzyme catalyses hydroxyacetone + NADP(+) = methylglyoxal + NADPH + H(+). It carries out the reaction a primary alcohol + NADP(+) = an aldehyde + NADPH + H(+). Its function is as follows. Aldo-keto reductase that contributes to cellular methylglyoxal detoxification by catalyzing the NADPH-dependent conversion of methylglyoxal to acetol. It also exhibits activity with glyoxal and probably plays a significant role in detoxification of glyoxal in vivo. Can also use aromatic aldehydes such as 4-nitrobenzaldehyde, 3-nitrobenzaldehyde and benzaldehyde, and phenylglyoxal. In Escherichia coli (strain K12), this protein is Methylglyoxal reductase YeaE (yeaE).